The primary structure comprises 122 residues: S-protein homolog 23 (122 aa).

The first 20 residues, 1–20 (MQNLSILLVCSFCILGHVSS), serve as a signal peptide directing secretion. N86 is a glycosylation site (N-linked (GlcNAc...) asparagine).

This sequence belongs to the plant self-incompatibility (S1) protein family.

The protein resides in the secreted. This Arabidopsis thaliana (Mouse-ear cress) protein is S-protein homolog 23.